Consider the following 475-residue polypeptide: Ubiquilin-like protein (475 aa).

Residues 31–105 (TRVIVKTAGN…IYLVIKSKQG (75 aa)) form the Ubiquitin-like domain. Disordered regions lie at residues 113–138 (FRDL…VHQP) and 305–325 (QVQS…QLTQ). Over residues 129–138 (KGNSSRVHQP) the composition is skewed to polar residues.

The chain is Ubiquilin-like protein (UBQLNL) from Homo sapiens (Human).